The following is a 103-amino-acid chain: Co-chaperonin GroES (103 aa).

It belongs to the GroES chaperonin family. Heptamer of 7 subunits arranged in a ring. Interacts with the chaperonin GroEL.

Its subcellular location is the cytoplasm. Functionally, together with the chaperonin GroEL, plays an essential role in assisting protein folding. The GroEL-GroES system forms a nano-cage that allows encapsulation of the non-native substrate proteins and provides a physical environment optimized to promote and accelerate protein folding. GroES binds to the apical surface of the GroEL ring, thereby capping the opening of the GroEL channel. The sequence is that of Co-chaperonin GroES from Synechococcus sp. (strain CC9902).